Consider the following 618-residue polypeptide: Sphingomyelin phosphodiesterase 2 (618 aa).

The signal sequence occupies residues 1–22 (MQQPLIILGIGIVLALVSNVES). One can recognise a Saposin B-type domain in the interval 68–151 (RKMSCLFCTF…AFIANCGHSD (84 aa)). Intrachain disulfides connect cysteine 72–cysteine 147, cysteine 75–cysteine 140, and cysteine 103–cysteine 114. N-linked (GlcNAc...) asparagine glycosylation is present at asparagine 89. N-linked (GlcNAc...) asparagine glycosylation occurs at asparagine 159. Zn(2+) contacts are provided by aspartate 189 and histidine 191. 2 disulfide bridges follow: cysteine 204–cysteine 216 and cysteine 217–cysteine 249. Aspartate 278 contacts Zn(2+). The N-linked (GlcNAc...) asparagine glycan is linked to asparagine 298. 4 residues coordinate Zn(2+): asparagine 318, histidine 427, histidine 461, and histidine 463. Residues cysteine 387 and cysteine 435 are joined by a disulfide bond. Residues asparagine 525 and asparagine 568 are each glycosylated (N-linked (GlcNAc...) asparagine). 2 cysteine pairs are disulfide-bonded: cysteine 588–cysteine 594 and cysteine 600–cysteine 613.

It belongs to the acid sphingomyelinase family. It depends on Zn(2+) as a cofactor.

It localises to the secreted. It catalyses the reaction a sphingomyelin + H2O = phosphocholine + an N-acylsphing-4-enine + H(+). The catalysed reaction is an N-acyl-15-methylhexadecasphing-4-enine-1-phosphocholine + H2O = an N-acyl-15-methylhexadecasphing-4-enine + phosphocholine + H(+). It functions in the pathway lipid metabolism; sphingolipid metabolism. In terms of biological role, sphingomyelin phosphodiesterase (sphingomyelinase) that converts sphingomyelin (N-acyl-sphingoid-1-phosphocholine) to ceramide (N-acyl-sphingoid base) and phosphocholine at acidic pH. Displays its enzymatic activity when secreted. May play distinct roles in signaling. The polypeptide is Sphingomyelin phosphodiesterase 2 (asm-2) (Caenorhabditis elegans).